Here is a 62-residue protein sequence, read N- to C-terminus: MATKTLKVTQTKSSIGRLPKHRATLTGLGLRRINHTVEVEDTPSVRGMINKVYYMVSVEELG.

It belongs to the universal ribosomal protein uL30 family. Part of the 50S ribosomal subunit.

The sequence is that of Large ribosomal subunit protein uL30 from Shewanella frigidimarina (strain NCIMB 400).